A 346-amino-acid chain; its full sequence is Mitogen-activated protein kinase kinase 1c (346 aa).

A Protein kinase domain is found at 70 to 332 (LELVRFLGKG…TTDLLKHPFL (263 aa)). Residues 76 to 84 (LGKGAGGTV) and Lys99 contribute to the ATP site. The Proton acceptor role is filled by Asp194.

Belongs to the protein kinase superfamily. STE Ser/Thr protein kinase family. MAP kinase kinase subfamily.

It carries out the reaction L-seryl-[protein] + ATP = O-phospho-L-seryl-[protein] + ADP + H(+). The enzyme catalyses L-threonyl-[protein] + ATP = O-phospho-L-threonyl-[protein] + ADP + H(+). The catalysed reaction is L-tyrosyl-[protein] + ATP = O-phospho-L-tyrosyl-[protein] + ADP + H(+). Functionally, the CERK1, MEKK1a/b, MKK1a/b/c and MPK4a/b proteins are involved in pathogen defense. The pathway induces rapid growth inhibition, cell wall depositions and accumulation of defense-related transcripts. This protein is required for full defense response to fungal pathogen chitin. This is Mitogen-activated protein kinase kinase 1c from Physcomitrium patens (Spreading-leaved earth moss).